The chain runs to 208 residues: Thymidylate kinase (208 aa).

Gly7–Thr14 is an ATP binding site.

Belongs to the thymidylate kinase family.

The catalysed reaction is dTMP + ATP = dTDP + ADP. Its function is as follows. Phosphorylation of dTMP to form dTDP in both de novo and salvage pathways of dTTP synthesis. The sequence is that of Thymidylate kinase (tmk) from Xylella fastidiosa (strain 9a5c).